A 172-amino-acid polypeptide reads, in one-letter code: Small ribosomal subunit protein uS5 (172 aa).

The S5 DRBM domain maps to 15–78; it reads LNDKLIFINR…ANAKRNLSRI (64 aa).

This sequence belongs to the universal ribosomal protein uS5 family. Part of the 30S ribosomal subunit. Contacts proteins S4 and S8.

Functionally, with S4 and S12 plays an important role in translational accuracy. Located at the back of the 30S subunit body where it stabilizes the conformation of the head with respect to the body. The sequence is that of Small ribosomal subunit protein uS5 from Dehalococcoides mccartyi (strain ATCC BAA-2266 / KCTC 15142 / 195) (Dehalococcoides ethenogenes (strain 195)).